A 216-amino-acid chain; its full sequence is Large ribosomal subunit protein uL4 (216 aa).

The tract at residues 47 to 77 is disordered; that stretch reads THKVKGMGEVSGTTKKPYRQKGTGNARQGSL.

Belongs to the universal ribosomal protein uL4 family. Part of the 50S ribosomal subunit.

Functionally, one of the primary rRNA binding proteins, this protein initially binds near the 5'-end of the 23S rRNA. It is important during the early stages of 50S assembly. It makes multiple contacts with different domains of the 23S rRNA in the assembled 50S subunit and ribosome. Forms part of the polypeptide exit tunnel. This is Large ribosomal subunit protein uL4 from Acidiphilium cryptum (strain JF-5).